The following is a 125-amino-acid chain: Protein ApaG (125 aa).

In terms of domain architecture, ApaG spans 1-125 (MIEQPRICVQ…FRLAIPALIH (125 aa)).

The protein is Protein ApaG of Yersinia pseudotuberculosis serotype IB (strain PB1/+).